The sequence spans 292 residues: Medium chain reductase/dehydrogenase ucsI (292 aa).

Residue Cys-43 coordinates Zn(2+). Tyr-49 is a binding site for substrate. 2 residues coordinate Zn(2+): His-65 and Glu-66. NAD(+)-binding positions include 184–189, Asp-208, Arg-213, and 276–278; these read GCGPVG and IGA.

This sequence belongs to the zinc-containing alcohol dehydrogenase family. It depends on Zn(2+) as a cofactor.

It functions in the pathway mycotoxin biosynthesis. Its function is as follows. Medium chain reductase/dehydrogenase; part of the gene cluster that mediates the biosynthesis of UCS1025A, a member of the pyrrolizidinone family that acts as a strong telomerase inhibitor and displays potent antibacterial and antitumor properties. These compounds share a hemiaminal-containing pyrrolizidinone core fused with a gamma-lactone, giving a furopyrrolizidine that is connected to a decalin fragment. The polyketide synthase module (PKS) of the PKS-NRPS ucsA is responsible for the synthesis of the polyketide backbone via the condensation of an acetyl-CoA starter unit with 6 malonyl-CoA units. The downstream nonribosomal peptide synthetase (NRPS) module then amidates the carboxyl end of the polyketide with a 2S,3S-methylproline derived from L-isoleucine by the 2-oxoglutarate-dependent dioxygenase ucsF which converts L-isoleucine to (4S,5S)-4-methylpyrroline-5-carboxylate that is further converted to 2S,3S-methylproline by the pyrroline-5-carboxylate reductase ucsG. Reductive release of the completed aminoacyl polyketide from the assembly line can form the 3-pyrrolin-2-one structure via an intramolecular Knoevenagel reaction. Because ucsA lacks a designated enoylreductase (ER) domain, the required activity is provided the enoyl reductase ucsL. This keto acyclic precursor is the substrate of the Diels-Alderase ucsH, that catalyzes the Diels-Alder cycloaddition. Oxidation of the 3S-methyl group to a carboxylate by the cytochrome P450 monooxygenase ucsK allows an oxa-Michael cyclization that might involve the reductase/dehydrogenase ucsI and which furnishes the furopyrrolizidine. The oxidase ucsJ likely plays a critical role in stereoselective reduction of the C5-C6 double bond to afford the required R-configured carboxylate group. Further enolization and oxidation at C5 by an unidentified enzyme affords the last intermediate that can undergo oxa-Michael cyclization to yield UCS1025A. This chain is Medium chain reductase/dehydrogenase ucsI, found in Acremonium sp.